The primary structure comprises 777 residues: Hepatocyte growth factor-regulated tyrosine kinase substrate (777 aa).

In terms of domain architecture, VHS spans 15–143 (ATSQLLLETD…IMKVEGHVFP (129 aa)). The segment at 160–220 (WVDAEECHRC…VCEPCFEQLN (61 aa)) adopts an FYVE-type zinc-finger fold. Zn(2+) contacts are provided by C166, C169, C182, C185, C190, and C193. Residue K207 is modified to N6-acetyllysine. C212 and C215 together coordinate Zn(2+). Residues 223–319 (AEGKAASTTE…SPVNSSAPLA (97 aa)) form a disordered region. Positions 225 to 541 (GKAASTTELP…QRLQEQEKER (317 aa)) are interaction with SNX1. One can recognise a UIM domain in the interval 258-277 (QEEEELQLALALSQSEAEEK). Low complexity predominate over residues 292–311 (AEPTPVASSAPPASSLYSSP). A phosphotyrosine mark is found at Y308, Y329, and Y334. The interval 338–370 (KQEEARKSPTPSAPVPLTEPTAQPGEGHAIPAN) is disordered. The interaction with SNAP25 and TRAK2 stretch occupies residues 443 to 541 (SINTMHPQLL…QRLQEQEKER (99 aa)). An interaction with STAM region spans residues 452-570 (LELLNQLDER…FSLPYAQLQA (119 aa)). The interval 478–777 (ARGALSALRE…GSEAQLISFD (300 aa)) is interaction with NF2. K549 is subject to N6-succinyllysine. A compositionally biased stretch (low complexity) spans 645–658 (AAAQGPAGPTTSPA). Disordered regions lie at residues 645–698 (AAAQ…YMGS) and 712–777 (NLMP…ISFD). Composition is skewed to polar residues over residues 659–698 (YSSY…YMGS) and 730–739 (PYISGQQPVY). The span at 753 to 777 (PPVAQQPPAQGPPAQGSEAQLISFD) shows a compositional bias: low complexity.

As to quaternary structure, component of the ESCRT-0 complex composed of STAM or STAM2 and HGS. Part of a complex at least composed of HSG, STAM2 (or probably STAM) and EPS15. Interacts with STAM. Interacts with STAM2. Interacts with EPS15; the interaction is direct, calcium-dependent and inhibited by SNAP25. Identified in a complex with STAM and LITAF. Found in a complex with STAM and E3 ligase ITCH and DTX3L. Interacts with E3 ligase DTX3L; the interaction brings together STAM and HSG, promotes their recruitment to early endosomes and decreases STAM and HGS ubiquitination by ITCH. Interacts with NF2; the interaction is direct. Interacts with ubiquitin; the interaction is direct. Interacts with VPS37C. Interacts with SMAD1, SMAD2 and SMAD3. Interacts with TSG101; the interaction mediates the association with the ESCRT-I complex. Interacts with SNAP25; the interaction is direct and decreases with addition of increasing concentrations of free calcium. Interacts with SNX1; the interaction is direct. Component of a 550 kDa membrane complex at least composed of HGS and SNX1 but excluding EGFR. Interacts with TRAK1. Interacts with TRAK2. Component of the CART complex, at least composed of ACTN4, HGS/HRS, MYO5B and TRIM3. Interacts (via UIM domain) with UBQLN1 (via ubiquitin-like domain). Interacts with ARRDC3. Identified in a complex containing at least ARRDC4, AVPR2 and HGS. Interacts with LAPTM4B; promotes HGS ubiquitination. In terms of processing, phosphorylated on Tyr-334. A minor site of phosphorylation on Tyr-329 is detected. Phosphorylation occurs in response to EGF, IL-2, GM-CSF and HGF. Ubiquitinated by ITCH.

The protein resides in the cytoplasm. It is found in the early endosome membrane. It localises to the endosome. Its subcellular location is the multivesicular body membrane. Functionally, involved in intracellular signal transduction mediated by cytokines and growth factors. When associated with STAM it suppresses DNA signaling upon stimulation by IL-2 and GM-CSF. Could be a direct effector of PI3-kinase in vesicular pathway via early endosomes and may regulate trafficking to early and late endosomes by recruiting clathrin. May concentrate ubiquitinated receptors within clathrin-coated regions. Involved in down-regulation of receptor tyrosine kinase via multivesicular body (MVBs) when complexed with STAM (ESCRT-0 complex). The ESCRT-0 complex binds ubiquitin and acts as a sorting machinery that recognizes ubiquitinated receptors and transfers them to further sequential lysosomal sorting/trafficking processes. May contribute to the efficient recruitment of SMADs to the activin receptor complex. Involved in receptor recycling via its association with the CART complex, a multiprotein complex required for efficient transferrin receptor recycling but not for EGFR degradation. This chain is Hepatocyte growth factor-regulated tyrosine kinase substrate (HGS), found in Bos taurus (Bovine).